The following is a 553-amino-acid chain: Hyaluronan synthase 3 (553 aa).

The Cytoplasmic segment spans residues 1–15; the sequence is MPVQLTTALRVVGTS. Residues 16 to 36 form a helical membrane-spanning segment; that stretch reads LFALAVLGGILAAYVTGYQFI. The Extracellular portion of the chain corresponds to 37 to 44; that stretch reads HTEKHYLS. A helical transmembrane segment spans residues 45 to 65; sequence FGLYGAILGLHLLIQSLFAFL. Residues 66 to 377 are Cytoplasmic-facing; it reads EHRRMRRAGQ…NSLWFHKHHL (312 aa). Residues 378–398 traverse the membrane as a helical segment; sequence WMTYESVVTGFFPFFLIATVI. Residues 399-408 lie on the Extracellular side of the membrane; that stretch reads QLFYRGRIWN. A helical transmembrane segment spans residues 409 to 429; that stretch reads ILLFLLTVQLVGIIKATYACF. Residues 430 to 440 lie on the Cytoplasmic side of the membrane; the sequence is LRGNAEMIFMS. Residues 441 to 461 form a helical membrane-spanning segment; that stretch reads LYSLLYMSSLLPAKIFAIATI. N-linked (GlcNAc...) asparagine glycosylation is present at Asn462. Residues 462-473 lie on the Extracellular side of the membrane; it reads NKSGWGTSGRKT. Residues 474-494 form a helical membrane-spanning segment; that stretch reads IVVNFIGLIPVSIWVAVLLGG. The Cytoplasmic segment spans residues 495–515; that stretch reads LAYTAYCQDLFSETELAFLVS. A helical transmembrane segment spans residues 516-536; the sequence is GAILYGCYWVALLMLYLAIIA. Topologically, residues 537-553 are extracellular; it reads RRCGKKPEQYSLAFAEV.

This sequence belongs to the NodC/HAS family. In terms of assembly, homodimers. Forms heterodimers with HAS2 and HAS1. Mg(2+) serves as cofactor. O-GlcNAcylation increases the hyaluronan synthase activity, HAS3 stability and its plasma membrane residence. The concentration of UDP-GlcNAc controls the level of O-GlcNAc modification.

It localises to the cell membrane. Its subcellular location is the golgi apparatus membrane. It is found in the golgi apparatus. The protein localises to the trans-Golgi network membrane. The protein resides in the early endosome. The catalysed reaction is [hyaluronan](n) + UDP-N-acetyl-alpha-D-glucosamine = N-acetyl-beta-D-glucosaminyl-(1-&gt;4)-[hyaluronan](n) + UDP + H(+). It catalyses the reaction N-acetyl-beta-D-glucosaminyl-(1-&gt;4)-[hyaluronan](n) + UDP-alpha-D-glucuronate = [hyaluronan](n+1) + UDP + H(+). It functions in the pathway glycan biosynthesis; hyaluronan biosynthesis. The enzymatic activity depends on the availability of cytosolic levels of UDP-GlcUA and UDP-GlcNAc. Its function is as follows. Catalyzes the addition of GlcNAc or GlcUA monosaccharides to the nascent hyaluronan polymer. Therefore, it is essential to hyaluronan synthesis a major component of most extracellular matrices that has a structural role in tissues architectures and regulates cell adhesion, migration and differentiation. This is one of three isoenzymes responsible for cellular hyaluronan synthesis. The sequence is that of Hyaluronan synthase 3 from Homo sapiens (Human).